The sequence spans 365 residues: MPEITVRAKSKTYPVYINEFALDDVRGKWTESLAKYSHVFVLTDGHVAELHKSKLDEILTDLPVVTYYVAPNGEEAKTFRVYEDVMTKMIESGLDRKAVLIAFGGGVIGDLGGFVASTYMRGIPFYQVPTTVLAHDSAVGGKVAINHPLGKNMIGNFYQPEAVIYDTQFFATLPEREMRSGFAEMIKHALISDYTLLRALMDTFTEPKDFYTKDLTPFLQRGIEIKANIVAQDETEQGVRAYLNFGHTFGHALEAYGNFSKWLHGEAITYGMIYALTMSETIYGLDFNLAEFKTWLRNLGYDTTFDVTVPFSNILENMRHDKKTTFNEISMVLLKEIGKPVIFKAEDELIFETYKRVMRNGEDAF.

NAD(+) contacts are provided by residues 106-110 (GVIGD), 130-131 (TT), lysine 142, lysine 151, and 169-172 (FFAT). Positions 184, 247, and 264 each coordinate Zn(2+).

Belongs to the sugar phosphate cyclases superfamily. Dehydroquinate synthase family. Co(2+) serves as cofactor. The cofactor is Zn(2+). It depends on NAD(+) as a cofactor.

The protein resides in the cytoplasm. The catalysed reaction is 7-phospho-2-dehydro-3-deoxy-D-arabino-heptonate = 3-dehydroquinate + phosphate. The protein operates within metabolic intermediate biosynthesis; chorismate biosynthesis; chorismate from D-erythrose 4-phosphate and phosphoenolpyruvate: step 2/7. In terms of biological role, catalyzes the conversion of 3-deoxy-D-arabino-heptulosonate 7-phosphate (DAHP) to dehydroquinate (DHQ). The polypeptide is 3-dehydroquinate synthase (Listeria welshimeri serovar 6b (strain ATCC 35897 / DSM 20650 / CCUG 15529 / CIP 8149 / NCTC 11857 / SLCC 5334 / V8)).